The primary structure comprises 361 residues: Peptide chain release factor 1 (361 aa).

Gln-237 is modified (N5-methylglutamine). Positions 285 to 306 (QAEQSAQQTEQRRQLVGSGDRS) are disordered.

This sequence belongs to the prokaryotic/mitochondrial release factor family. Methylated by PrmC. Methylation increases the termination efficiency of RF1.

The protein resides in the cytoplasm. In terms of biological role, peptide chain release factor 1 directs the termination of translation in response to the peptide chain termination codons UAG and UAA. The chain is Peptide chain release factor 1 from Alkalilimnicola ehrlichii (strain ATCC BAA-1101 / DSM 17681 / MLHE-1).